A 223-amino-acid chain; its full sequence is Uracil-DNA glycosylase (223 aa).

D67 serves as the catalytic Proton acceptor.

The protein belongs to the uracil-DNA glycosylase (UDG) superfamily. UNG family.

Its subcellular location is the cytoplasm. It carries out the reaction Hydrolyzes single-stranded DNA or mismatched double-stranded DNA and polynucleotides, releasing free uracil.. In terms of biological role, excises uracil residues from the DNA which can arise as a result of misincorporation of dUMP residues by DNA polymerase or due to deamination of cytosine. This is Uracil-DNA glycosylase from Borreliella burgdorferi (strain ZS7) (Borrelia burgdorferi).